The following is a 131-amino-acid chain: Large ribosomal subunit protein bL17 (131 aa).

The protein belongs to the bacterial ribosomal protein bL17 family. Part of the 50S ribosomal subunit. Contacts protein L32.

This is Large ribosomal subunit protein bL17 from Methylobacillus flagellatus (strain ATCC 51484 / DSM 6875 / VKM B-1610 / KT).